Here is a 418-residue protein sequence, read N- to C-terminus: MNIFEELKARGLVFQTTDEEALVKALTEGQVSYYTGYDPTADSLHLGHLVAILTSRRLQLAGHKPYALVGGATGLIGDPSFKDAERILQTKETVLDWSQKIKEQLSCFLDFDNGENKAELVNNYDWFSQISFIDFLRDVGKHFTINYMMSKDSVKKRIETGISYTEFAYQVMQGYDFYELNAKHNVTLQIGGSDQWGNMTAGTELLRKKADKTGHVMTVPLITDATGKKFGKSEGNAIWLDAKKTSPYEMYQFWLNVMDDDAVRFLKIFTFLSLDEIAAIEEQFNAARHERLAQKTLAREVVTLVHGEAAYQQALNITEQLFAGAIKNLSAAELKQGLSNVPNYQVQAEDSLNIVDMLVTAGISPSKRQAREDLQNGAIYLNGERLQDLDYSLSTADRIDNQLTVIRRGKKKYAVLTY.

Tyr34 lines the L-tyrosine pocket. Residues 39 to 48 (PTADSLHLGH) carry the 'HIGH' region motif. Residues Tyr169 and Gln173 each coordinate L-tyrosine. A 'KMSKS' region motif is present at residues 229–233 (KFGKS). Lys232 is an ATP binding site. The 67-residue stretch at 352–418 (LNIVDMLVTA…GKKKYAVLTY (67 aa)) folds into the S4 RNA-binding domain.

The protein belongs to the class-I aminoacyl-tRNA synthetase family. TyrS type 1 subfamily. Homodimer.

It localises to the cytoplasm. The catalysed reaction is tRNA(Tyr) + L-tyrosine + ATP = L-tyrosyl-tRNA(Tyr) + AMP + diphosphate + H(+). Its function is as follows. Catalyzes the attachment of tyrosine to tRNA(Tyr) in a two-step reaction: tyrosine is first activated by ATP to form Tyr-AMP and then transferred to the acceptor end of tRNA(Tyr). The chain is Tyrosine--tRNA ligase from Streptococcus equi subsp. equi (strain 4047).